The following is a 427-amino-acid chain: 3-phosphoshikimate 1-carboxyvinyltransferase (427 aa).

The 3-phosphoshikimate site is built by K20, S21, and R25. K20 provides a ligand contact to phosphoenolpyruvate. 2 residues coordinate phosphoenolpyruvate: G92 and R120. S166, Q168, D312, and K339 together coordinate 3-phosphoshikimate. Q168 lines the phosphoenolpyruvate pocket. Residue D312 is the Proton acceptor of the active site. 2 residues coordinate phosphoenolpyruvate: R343 and R385.

The protein belongs to the EPSP synthase family. In terms of assembly, monomer.

The protein resides in the cytoplasm. It catalyses the reaction 3-phosphoshikimate + phosphoenolpyruvate = 5-O-(1-carboxyvinyl)-3-phosphoshikimate + phosphate. It participates in metabolic intermediate biosynthesis; chorismate biosynthesis; chorismate from D-erythrose 4-phosphate and phosphoenolpyruvate: step 6/7. Its function is as follows. Catalyzes the transfer of the enolpyruvyl moiety of phosphoenolpyruvate (PEP) to the 5-hydroxyl of shikimate-3-phosphate (S3P) to produce enolpyruvyl shikimate-3-phosphate and inorganic phosphate. The sequence is that of 3-phosphoshikimate 1-carboxyvinyltransferase from Streptococcus equi subsp. zooepidemicus (strain H70).